The chain runs to 325 residues: Acetyl-coenzyme A carboxylase carboxyl transferase subunit alpha (325 aa).

Positions 38–292 constitute a CoA carboxyltransferase C-terminal domain; the sequence is KLEKRLHALE…DQVLEKSLKQ (255 aa).

It belongs to the AccA family. In terms of assembly, acetyl-CoA carboxylase is a heterohexamer composed of biotin carboxyl carrier protein (AccB), biotin carboxylase (AccC) and two subunits each of ACCase subunit alpha (AccA) and ACCase subunit beta (AccD).

It localises to the cytoplasm. The enzyme catalyses N(6)-carboxybiotinyl-L-lysyl-[protein] + acetyl-CoA = N(6)-biotinyl-L-lysyl-[protein] + malonyl-CoA. It participates in lipid metabolism; malonyl-CoA biosynthesis; malonyl-CoA from acetyl-CoA: step 1/1. Functionally, component of the acetyl coenzyme A carboxylase (ACC) complex. First, biotin carboxylase catalyzes the carboxylation of biotin on its carrier protein (BCCP) and then the CO(2) group is transferred by the carboxyltransferase to acetyl-CoA to form malonyl-CoA. The polypeptide is Acetyl-coenzyme A carboxylase carboxyl transferase subunit alpha (Halalkalibacterium halodurans (strain ATCC BAA-125 / DSM 18197 / FERM 7344 / JCM 9153 / C-125) (Bacillus halodurans)).